A 191-amino-acid polypeptide reads, in one-letter code: Cytochrome c oxidase assembly protein CtaG (191 aa).

The Cytoplasmic segment spans residues 1–9 (MSLSPHQKT). Residues 10 to 30 (AGGLVLVVAVMGAASFAAVPF) traverse the membrane as a helical; Signal-anchor for type II membrane protein segment. Residues 31–191 (YNWFCRVTGF…LAAESATDVN (161 aa)) are Periplasmic-facing.

Belongs to the COX11/CtaG family.

The protein localises to the cell inner membrane. Its function is as follows. Exerts its effect at some terminal stage of cytochrome c oxidase synthesis, probably by being involved in the insertion of the copper B into subunit I. The polypeptide is Cytochrome c oxidase assembly protein CtaG (Cereibacter sphaeroides (strain ATCC 17023 / DSM 158 / JCM 6121 / CCUG 31486 / LMG 2827 / NBRC 12203 / NCIMB 8253 / ATH 2.4.1.) (Rhodobacter sphaeroides)).